Here is a 215-residue protein sequence, read N- to C-terminus: Ribose-5-phosphate isomerase A (215 aa).

Residues 26–29 (TGST), 79–82 (DGAD), and 92–95 (KGGG) contribute to the substrate site. Glu-101 functions as the Proton acceptor in the catalytic mechanism. Lys-119 lines the substrate pocket.

It belongs to the ribose 5-phosphate isomerase family. In terms of assembly, homodimer.

The enzyme catalyses aldehydo-D-ribose 5-phosphate = D-ribulose 5-phosphate. Its pathway is carbohydrate degradation; pentose phosphate pathway; D-ribose 5-phosphate from D-ribulose 5-phosphate (non-oxidative stage): step 1/1. Its function is as follows. Catalyzes the reversible conversion of ribose-5-phosphate to ribulose 5-phosphate. This chain is Ribose-5-phosphate isomerase A, found in Xanthomonas euvesicatoria pv. vesicatoria (strain 85-10) (Xanthomonas campestris pv. vesicatoria).